The primary structure comprises 455 residues: tRNA modification GTPase MnmE (455 aa).

(6S)-5-formyl-5,6,7,8-tetrahydrofolate-binding residues include Arg24, Glu81, and Lys120. Residues 216 to 378 enclose the TrmE-type G domain; it reads GMTVVIAGRP…LREHLKACMG (163 aa). Position 226 (Asn226) interacts with K(+). Residues 226–231, 245–251, 270–273, 335–338, and 359–361 contribute to the GTP site; these read NAGKSS, TDIAGTT, DTAG, NKAD, and SAR. Ser230 is a binding site for Mg(2+). 3 residues coordinate K(+): Thr245, Ile247, and Thr250. A Mg(2+)-binding site is contributed by Thr251. Lys455 lines the (6S)-5-formyl-5,6,7,8-tetrahydrofolate pocket.

The protein belongs to the TRAFAC class TrmE-Era-EngA-EngB-Septin-like GTPase superfamily. TrmE GTPase family. As to quaternary structure, homodimer. Heterotetramer of two MnmE and two MnmG subunits. It depends on K(+) as a cofactor.

The protein resides in the cytoplasm. In terms of biological role, exhibits a very high intrinsic GTPase hydrolysis rate. Involved in the addition of a carboxymethylaminomethyl (cmnm) group at the wobble position (U34) of certain tRNAs, forming tRNA-cmnm(5)s(2)U34. The protein is tRNA modification GTPase MnmE of Pseudomonas aeruginosa (strain ATCC 15692 / DSM 22644 / CIP 104116 / JCM 14847 / LMG 12228 / 1C / PRS 101 / PAO1).